The chain runs to 183 residues: Ras-related protein Rap-2a (183 aa).

10 to 17 (GSGGVGKS) is a binding site for GTP. An Effector region motif is present at residues 32–40 (YDPTIEDFY). A glycan ((Microbial infection) O-linked (Glc) threonine; by C.difficile toxin TcdA, and by P.sordellii toxin TcsL) is linked at threonine 35. GTP contacts are provided by residues 57–61 (DTAGT) and 116–119 (NKVD). S-palmitoyl cysteine attachment occurs at residues cysteine 176 and cysteine 177. A Cysteine methyl ester modification is found at cysteine 180. Cysteine 180 is lipidated: S-farnesyl cysteine. Positions 181-183 (NIQ) are cleaved as a propeptide — removed in mature form.

The protein belongs to the small GTPase superfamily. Ras family. Interacts (GTP-bound form) with RUNDC3A. Interacts with RGS14; the interaction is GTP-dependent. Interacts with PLCE1. Interacts with ARHGAP29, SGSM1, SGSM2 and SGSM3. Interacts (GTP-bound form preferentially) with TNIK (via the CNH domain); the interaction is direct and recruits RAP2A to the E3 ubiquitin ligase NEDD4. Interacts with MINK1. Interacts (GTP-bound form preferentially) with MAP4K4. Interacts with cytoskeletal actin. Post-translationally, ubiquitinated; undergoes 'Lys-63' monoubiquitination and diubiquitination by NEDD4. Multiple lysine residues are probably modified. Ubiquitination requires TNIK, prevents interaction with effectors and inactivates RAP2A. Ubiquitination by the ECS(RAB40B) complex leads to RAP2A localization to lamellipodia plasma membrane, activation, and regulation of sorting at early endosomes for recycling to the lamellipodia plasma membrane. Palmitoylated. Palmitoylation is required for association with recycling endosome membranes and activation of TNIK. In terms of processing, (Microbial infection) Glucosylated at Thr-35 by C.difficile toxin TcdA in the colonic epithelium, and by P.sordellii toxin TcsL in the vascular endothelium.

Its subcellular location is the midbody. It localises to the cell projection. It is found in the lamellipodium membrane. The protein resides in the golgi apparatus. The protein localises to the recycling endosome membrane. Its subcellular location is the lysosome. It catalyses the reaction GTP + H2O = GDP + phosphate + H(+). Activated by the guanine nucleotide-exchange factors RAPGEF3 and RAPGEF4 in a cAMP-dependent manner. Nucleotide exchange is also specifically stimulated by RAPGEF5, RASGEF1A and RASGEF1B. In terms of biological role, small GTP-binding protein which cycles between a GDP-bound inactive and a GTP-bound active form. In its active form interacts with and regulates several effectors including MAP4K4, MINK1 and TNIK. Part of a signaling complex composed of NEDD4, RAP2A and TNIK which regulates neuronal dendrite extension and arborization during development. More generally, it is part of several signaling cascades and regulates cytoskeletal rearrangements, cell migration, cell adhesion and cell spreading. The protein is Ras-related protein Rap-2a of Homo sapiens (Human).